The primary structure comprises 120 residues: C-C motif chemokine 27 (120 aa).

The N-terminal stretch at 1–25 (MMEGLSPASSLPLLLLLLSPAPEAA) is a signal peptide. 2 disulfide bridges follow: Cys-34–Cys-63 and Cys-35–Cys-78.

The protein belongs to the intercrine beta (chemokine CC) family. As to quaternary structure, monomer, dimer, and tetramer. Heparin avidly promotes oligomerization. Interacts with TNFAIP6 (via Link domain). As to expression, isoform 1 is predominantly expressed in placenta and weakly in skin. Isoform 2 is predominantly expressed in testes and brain, weakly in kidney and liver and even lower in heart and muscle. Low expression of both isoforms in other tissues.

The protein localises to the secreted. Its subcellular location is the nucleus. In terms of biological role, chemotactic factor that attracts skin-associated memory T-lymphocytes. May play a role in mediating homing of lymphocytes to cutaneous sites. May play a role in cell migration during embryogenesis. Nuclear forms may facilitate cellular migration by inducing cytoskeletal relaxation. Binds to CCR10. In Mus musculus (Mouse), this protein is C-C motif chemokine 27 (Ccl27).